We begin with the raw amino-acid sequence, 454 residues long: Bifunctional protein GlmU (454 aa).

Residues 1–226 form a pyrophosphorylase region; the sequence is MALNVVILAA…AIEVEGANNR (226 aa). UDP-N-acetyl-alpha-D-glucosamine-binding positions include 8-11, Lys-22, Gln-73, 78-79, 100-102, Gly-137, Glu-151, Asn-166, and Asn-224; these read LAAG, GT, and YGD. Asp-102 lines the Mg(2+) pocket. Residue Asn-224 participates in Mg(2+) binding. Residues 227–247 are linker; the sequence is VQLAQLERAYQAREAEKLMIA. An N-acetyltransferase region spans residues 248–454; it reads GANLRDPSRI…GWQRPVKIKK (207 aa). Residues Arg-330 and Lys-348 each contribute to the UDP-N-acetyl-alpha-D-glucosamine site. His-360 acts as the Proton acceptor in catalysis. Positions 363 and 374 each coordinate UDP-N-acetyl-alpha-D-glucosamine. Acetyl-CoA-binding positions include Ala-377, 383–384, Ser-402, Ala-420, and Arg-437; that span reads NY.

It in the N-terminal section; belongs to the N-acetylglucosamine-1-phosphate uridyltransferase family. In the C-terminal section; belongs to the transferase hexapeptide repeat family. As to quaternary structure, homotrimer. It depends on Mg(2+) as a cofactor.

Its subcellular location is the cytoplasm. It carries out the reaction alpha-D-glucosamine 1-phosphate + acetyl-CoA = N-acetyl-alpha-D-glucosamine 1-phosphate + CoA + H(+). The catalysed reaction is N-acetyl-alpha-D-glucosamine 1-phosphate + UTP + H(+) = UDP-N-acetyl-alpha-D-glucosamine + diphosphate. It functions in the pathway nucleotide-sugar biosynthesis; UDP-N-acetyl-alpha-D-glucosamine biosynthesis; N-acetyl-alpha-D-glucosamine 1-phosphate from alpha-D-glucosamine 6-phosphate (route II): step 2/2. The protein operates within nucleotide-sugar biosynthesis; UDP-N-acetyl-alpha-D-glucosamine biosynthesis; UDP-N-acetyl-alpha-D-glucosamine from N-acetyl-alpha-D-glucosamine 1-phosphate: step 1/1. It participates in bacterial outer membrane biogenesis; LPS lipid A biosynthesis. Its function is as follows. Catalyzes the last two sequential reactions in the de novo biosynthetic pathway for UDP-N-acetylglucosamine (UDP-GlcNAc). The C-terminal domain catalyzes the transfer of acetyl group from acetyl coenzyme A to glucosamine-1-phosphate (GlcN-1-P) to produce N-acetylglucosamine-1-phosphate (GlcNAc-1-P), which is converted into UDP-GlcNAc by the transfer of uridine 5-monophosphate (from uridine 5-triphosphate), a reaction catalyzed by the N-terminal domain. This Shewanella oneidensis (strain ATCC 700550 / JCM 31522 / CIP 106686 / LMG 19005 / NCIMB 14063 / MR-1) protein is Bifunctional protein GlmU.